Reading from the N-terminus, the 171-residue chain is UPF0690 protein C1orf52 homolog A (171 aa).

Disordered stretches follow at residues 1 to 56 (MAAE…GPDE) and 126 to 171 (NVYQ…KRKV). Residues 47–56 (EAKKLPGPDE) are compositionally biased toward basic and acidic residues. The span at 146 to 160 (EEEAQEDSPPSDDEQ) shows a compositional bias: acidic residues.

Belongs to the UPF0690 family.

In Xenopus laevis (African clawed frog), this protein is UPF0690 protein C1orf52 homolog A.